Consider the following 152-residue polypeptide: Phospholipase A2 (152 aa).

The signal sequence occupies residues 1 to 20 (MAACHRILLLLSVAVASGAA). 8 disulfide bridges follow: Cys-39/Cys-96, Cys-53/Cys-142, Cys-55/Cys-70, Cys-69/Cys-124, Cys-75/Cys-149, Cys-76/Cys-117, Cys-85/Cys-110, and Cys-103/Cys-115. Ca(2+) is bound by residues Gly-56 and Gly-58. The active site involves His-73. Asp-74 contributes to the Ca(2+) binding site. Asp-118 is an active-site residue.

It belongs to the phospholipase A2 family. In terms of tissue distribution, expressed by the venom gland. Heavily expressed in the venom gland transcriptome.

The protein localises to the secreted. The enzyme catalyses a 1,2-diacyl-sn-glycero-3-phosphocholine + H2O = a 1-acyl-sn-glycero-3-phosphocholine + a fatty acid + H(+). Its function is as follows. PA2 catalyzes the calcium-dependent hydrolysis of the 2-acyl groups in 3-sn-phosphoglycerides. This chain is Phospholipase A2, found in Meiacanthus atrodorsalis (Forktail blenny).